Consider the following 42-residue polypeptide: uncharacterized protein (42 aa).

It localises to the plastid. The protein localises to the chloroplast. This is an uncharacterized protein from Diacronema lutheri (Unicellular marine alga).